A 223-amino-acid polypeptide reads, in one-letter code: Prolactin-3D4 (223 aa).

A signal peptide spans 1 to 28; it reads MQLTLTLSGSSMQLLLLVSNLLLWENMA. Cystine bridges form between Cys80–Cys198 and Cys215–Cys223. 2 N-linked (GlcNAc...) asparagine glycosylation sites follow: Asn108 and Asn157.

The protein belongs to the somatotropin/prolactin family. Post-translationally, N-glycosylated.

Its subcellular location is the secreted. This chain is Prolactin-3D4 (Prl3d4), found in Rattus norvegicus (Rat).